The chain runs to 96 residues: Phosphoribosyl-ATP pyrophosphatase (96 aa).

It belongs to the PRA-PH family.

Its subcellular location is the cytoplasm. The enzyme catalyses 1-(5-phospho-beta-D-ribosyl)-ATP + H2O = 1-(5-phospho-beta-D-ribosyl)-5'-AMP + diphosphate + H(+). It functions in the pathway amino-acid biosynthesis; L-histidine biosynthesis; L-histidine from 5-phospho-alpha-D-ribose 1-diphosphate: step 2/9. The sequence is that of Phosphoribosyl-ATP pyrophosphatase from Methanobrevibacter smithii (strain ATCC 35061 / DSM 861 / OCM 144 / PS).